Consider the following 156-residue polypeptide: 6,7-dimethyl-8-ribityllumazine synthase (156 aa).

5-amino-6-(D-ribitylamino)uracil-binding positions include Phe22, 57–59, and 81–83; these read AYE and TVI. 86 to 87 provides a ligand contact to (2S)-2-hydroxy-3-oxobutyl phosphate; sequence GT. Residue His89 is the Proton donor of the active site. Phe114 lines the 5-amino-6-(D-ribitylamino)uracil pocket. Arg128 lines the (2S)-2-hydroxy-3-oxobutyl phosphate pocket.

Belongs to the DMRL synthase family. As to quaternary structure, forms an icosahedral capsid composed of 60 subunits, arranged as a dodecamer of pentamers.

The catalysed reaction is (2S)-2-hydroxy-3-oxobutyl phosphate + 5-amino-6-(D-ribitylamino)uracil = 6,7-dimethyl-8-(1-D-ribityl)lumazine + phosphate + 2 H2O + H(+). It functions in the pathway cofactor biosynthesis; riboflavin biosynthesis; riboflavin from 2-hydroxy-3-oxobutyl phosphate and 5-amino-6-(D-ribitylamino)uracil: step 1/2. Its function is as follows. Catalyzes the formation of 6,7-dimethyl-8-ribityllumazine by condensation of 5-amino-6-(D-ribitylamino)uracil with 3,4-dihydroxy-2-butanone 4-phosphate. This is the penultimate step in the biosynthesis of riboflavin. The polypeptide is 6,7-dimethyl-8-ribityllumazine synthase (Proteus mirabilis (strain HI4320)).